Consider the following 61-residue polypeptide: Probable tautomerase SAV1363 (61 aa).

Catalysis depends on proline 2, which acts as the Proton acceptor; via imino nitrogen.

This sequence belongs to the 4-oxalocrotonate tautomerase family.

This Staphylococcus aureus (strain Mu50 / ATCC 700699) protein is Probable tautomerase SAV1363.